The sequence spans 250 residues: Golgi SNAP receptor complex member 1 (250 aa).

Ala-2 carries the post-translational modification N-acetylalanine. Residues 2–229 are Cytoplasmic-facing; the sequence is AAGTSNYWED…QRINLRKRRD (228 aa). The stretch at 9–30 forms a coiled coil; sequence WEDLRKQARQLENELDLKLVSF. Residues 38–59 are disordered; sequence SHSSARDGGRDRYSSDTTPLLN. Basic and acidic residues predominate over residues 41–51; that stretch reads SARDGGRDRYS. Residues 68–95 are a coiled coil; the sequence is ETMAIEIEQLLARLTGVNDKMAEYTNSA. Ser-141 is subject to Phosphoserine. The helical; Anchor for type IV membrane protein transmembrane segment at 230–250 threads the bilayer; the sequence is SLILGGVIGICTILLLLYAFH.

This sequence belongs to the GOSR1 family. Component of several multiprotein Golgi SNARE complexes. Identified in a SNARE complex with BET1, STX5 and YKT6, in a SNARE complex with BET1L, STX5 and YKT6, in a SNARE complex with STX5, GOSR2, SEC22B and BET1, and in complex with STX5 and COG3. Interacts with GABARAPL2.

Its subcellular location is the golgi apparatus membrane. Functionally, involved in transport from the ER to the Golgi apparatus as well as in intra-Golgi transport. It belongs to a super-family of proteins called t-SNAREs or soluble NSF (N-ethylmaleimide-sensitive factor) attachment protein receptor. May play a protective role against hydrogen peroxide induced cytotoxicity under glutathione depleted conditions in neuronal cells by regulating the intracellular ROS levels via inhibition of p38 MAPK (MAPK11, MAPK12, MAPK13 and MAPK14). Participates in docking and fusion stage of ER to cis-Golgi transport. Plays an important physiological role in VLDL-transport vesicle-Golgi fusion and thus in VLDL delivery to the hepatic cis-Golgi. This Cricetulus griseus (Chinese hamster) protein is Golgi SNAP receptor complex member 1 (GOSR1).